Consider the following 899-residue polypeptide: Bifunctional uridylyltransferase/uridylyl-removing enzyme (899 aa).

The tract at residues 1 to 342 (MPQMDPELFD…RAGESGPATP (342 aa)) is uridylyltransferase. The tract at residues 343–705 (LNSRFQVRDG…TTQREFEGGT (363 aa)) is uridylyl-removing. In terms of domain architecture, HD spans 461 to 583 (VDAHTLNLIK…VGDQTHLDYL (123 aa)). 2 consecutive ACT domains span residues 706-784 (QIFI…DEYP) and 816-897 (ILEL…SLQI).

Belongs to the GlnD family. Mg(2+) is required as a cofactor.

It catalyses the reaction [protein-PII]-L-tyrosine + UTP = [protein-PII]-uridylyl-L-tyrosine + diphosphate. It carries out the reaction [protein-PII]-uridylyl-L-tyrosine + H2O = [protein-PII]-L-tyrosine + UMP + H(+). Uridylyltransferase (UTase) activity is inhibited by glutamine, while glutamine activates uridylyl-removing (UR) activity. Functionally, modifies, by uridylylation and deuridylylation, the PII regulatory proteins (GlnB and homologs), in response to the nitrogen status of the cell that GlnD senses through the glutamine level. Under low glutamine levels, catalyzes the conversion of the PII proteins and UTP to PII-UMP and PPi, while under higher glutamine levels, GlnD hydrolyzes PII-UMP to PII and UMP (deuridylylation). Thus, controls uridylylation state and activity of the PII proteins, and plays an important role in the regulation of nitrogen assimilation and metabolism. This chain is Bifunctional uridylyltransferase/uridylyl-removing enzyme, found in Ectopseudomonas mendocina (strain ymp) (Pseudomonas mendocina).